Here is a 37-residue protein sequence, read N- to C-terminus: Photosystem II reaction center protein T (37 aa).

A helical transmembrane segment spans residues 3-23 (ALVYTFLLVSTLGILFFAIFF).

This sequence belongs to the PsbT family. PSII is composed of 1 copy each of membrane proteins PsbA, PsbB, PsbC, PsbD, PsbE, PsbF, PsbH, PsbI, PsbJ, PsbK, PsbL, PsbM, PsbT, PsbY, PsbZ, Psb30/Ycf12, at least 3 peripheral proteins of the oxygen-evolving complex and a large number of cofactors. It forms dimeric complexes.

Its subcellular location is the plastid. It localises to the chloroplast thylakoid membrane. Its function is as follows. Found at the monomer-monomer interface of the photosystem II (PS II) dimer, plays a role in assembly and dimerization of PSII. PSII is a light-driven water plastoquinone oxidoreductase, using light energy to abstract electrons from H(2)O, generating a proton gradient subsequently used for ATP formation. The chain is Photosystem II reaction center protein T from Ephedra sinica (Chinese ephedra).